A 276-amino-acid polypeptide reads, in one-letter code: Phosphonates import ATP-binding protein PhnC (276 aa).

One can recognise an ABC transporter domain in the interval 5–253; the sequence is IRVERLNKTF…LLNDLYGADL (249 aa). 37-44 lines the ATP pocket; sequence GASGSGKS.

Belongs to the ABC transporter superfamily. Phosphonates importer (TC 3.A.1.9.1) family. The complex is composed of two ATP-binding proteins (PhnC), two transmembrane proteins (PhnE) and a solute-binding protein (PhnD).

It localises to the cell inner membrane. It carries out the reaction phosphonate(out) + ATP + H2O = phosphonate(in) + ADP + phosphate + H(+). Functionally, part of the ABC transporter complex PhnCDE involved in phosphonates import. Responsible for energy coupling to the transport system. The sequence is that of Phosphonates import ATP-binding protein PhnC from Stutzerimonas stutzeri (Pseudomonas stutzeri).